The primary structure comprises 314 residues: 2,3-dihydroxyphenylpropionate/2,3-dihydroxicinnamic acid 1,2-dioxygenase (314 aa).

The active-site Proton donor is the His115. His179 serves as the catalytic Proton acceptor.

This sequence belongs to the LigB/MhpB extradiol dioxygenase family. Homotetramer. Fe(2+) is required as a cofactor.

It carries out the reaction 3-(2,3-dihydroxyphenyl)propanoate + O2 = (2Z,4E)-2-hydroxy-6-oxonona-2,4-dienedioate + H(+). The enzyme catalyses (2E)-3-(2,3-dihydroxyphenyl)prop-2-enoate + O2 = (2Z,4E,7E)-2-hydroxy-6-oxonona-2,4,7-trienedioate + H(+). The protein operates within aromatic compound metabolism; 3-phenylpropanoate degradation. Its function is as follows. Catalyzes the non-heme iron(II)-dependent oxidative cleavage of 2,3-dihydroxyphenylpropionic acid and 2,3-dihydroxicinnamic acid into 2-hydroxy-6-ketononadienedioate and 2-hydroxy-6-ketononatrienedioate, respectively. This chain is 2,3-dihydroxyphenylpropionate/2,3-dihydroxicinnamic acid 1,2-dioxygenase, found in Escherichia coli O81 (strain ED1a).